Here is a 78-residue protein sequence, read N- to C-terminus: Large ribosomal subunit protein bL28 (78 aa).

It belongs to the bacterial ribosomal protein bL28 family.

This chain is Large ribosomal subunit protein bL28, found in Pseudoalteromonas atlantica (strain T6c / ATCC BAA-1087).